Consider the following 879-residue polypeptide: Putative ankyrin repeat protein L88 (879 aa).

17 ANK repeats span residues 22 to 62 (KGFT…QKNK), 63 to 96 (KGYT…KTNI), 100 to 133 (EGIT…DINA), 137 to 170 (NGYT…NIDD), 174 to 207 (NGLT…DINA), 211 to 241 (NGRT…DIEA), 245 to 278 (KGLT…NIEA), 282 to 313 (KLRT…NIET), 317 to 347 (RNNT…NINH), 351 to 384 (EGCN…NINN), 387 to 420 (SERT…DPNI), 424 to 463 (NGNT…NPNF), 470 to 499 (NSLT…DINS), 506 to 542 (SALL…DVNI), 546 to 578 (NGNT…NPNT), 674 to 704 (SGIT…DPNI), and 708 to 738 (KGET…NPYI).

The chain is Putative ankyrin repeat protein L88 from Acanthamoeba polyphaga mimivirus (APMV).